The sequence spans 388 residues: Basigin (388 aa).

The N-terminal stretch at 1–21 (MAAGADVPCAVLALLVLGSLA) is a signal peptide. The Extracellular segment spans residues 27–323 (TAGFIKSPLS…SGSATVNLRV (297 aa)). The region spanning 43–131 (DSVELHCEAV…NHLSKSPKVK (89 aa)) is the Ig-like domain. 2 disulfides stabilise this stretch: C49–C113 and C162–C211. The Ig-like C2-type domain maps to 143–218 (ERPVITGQYS…YECIYNTNPV (76 aa)). N163, N222, N280, N286, and N307 each carry an N-linked (GlcNAc...) asparagine glycan. Residues 229–323 (PQVVAYKKSE…SGSATVNLRV (95 aa)) enclose the Ig-like V-type domain. A disulfide bridge links C250 with C306. A helical membrane pass occupies residues 324–344 (RSRLAALWPFLGIVAEVLVLV). At 345–388 (TIIFIYEKRRKPDEVLDDDDGGSAPLKSNATNHKDKNVRQRNAN) the chain is on the cytoplasmic side. Positions 358 to 388 (EVLDDDDGGSAPLKSNATNHKDKNVRQRNAN) are disordered.

As to quaternary structure, interacts with NXNL1, SLC2A1 and SLC16A1. Post-translationally, N-glycosylated. In terms of tissue distribution, retinal cone photoreceptors (at protein level). Brain endothelial cells, kidney epithelial cells and erythroblasts (at protein level).

The protein resides in the cell membrane. It localises to the photoreceptor inner segment. It is found in the cell projection. Its subcellular location is the cilium. The protein localises to the photoreceptor outer segment. The protein resides in the endoplasmic reticulum membrane. It localises to the basolateral cell membrane. Its function is as follows. Essential for normal retinal maturation and development. Acts as a retinal cell surface receptor for NXNL1 and plays an important role in NXNL1-mediated survival of retinal cone photoreceptors. In association with glucose transporter SLC16A1/GLUT1 and NXNL1, promotes retinal cone survival by enhancing aerobic glycolysis and accelerating the entry of glucose into photoreceptors. Signaling receptor for cyclophilins, essential for PPIA/CYPA and PPIB/CYPB-dependent signaling related to chemotaxis and adhesion of immune cells. Plays an important role in targeting the monocarboxylate transporters SLC16A1/GLUT1, SLC16A3, SLC16A8, SLC16A11 and SLC16A12 to the plasma membrane. Acts as a coreceptor for vascular endothelial growth factor receptor 2 (KDR/VEGFR2) in endothelial cells enhancing its VEGFA-mediated activation and downstream signaling. Promotes angiogenesis through EPAS1/HIF2A-mediated up-regulation of VEGFA and KDR/VEGFR2 in endothelial cells. In Gallus gallus (Chicken), this protein is Basigin (BSG).